A 423-amino-acid chain; its full sequence is Glycine amidinotransferase, mitochondrial (423 aa).

A mitochondrion-targeting transit peptide spans M1–T43. Residues T43–D63 form a disordered region. A phosphoserine mark is found at S46 and S49. Basic and acidic residues predominate over residues A52 to P61. D170 lines the arginine pocket. Active-site residues include D254 and H303. Residues D305, R322, S354, and S355 each contribute to the arginine site. The residue at position 385 (K385) is an N6-acetyllysine. Catalysis depends on C407, which acts as the Amidino-cysteine intermediate.

Belongs to the amidinotransferase family. Homodimer.

The protein localises to the mitochondrion inner membrane. The enzyme catalyses L-arginine + glycine = guanidinoacetate + L-ornithine. It catalyses the reaction 4-aminobutanoate + L-arginine = 4-guanidinobutanoate + L-ornithine. The catalysed reaction is beta-alanine + L-arginine = 3-guanidinopropanoate + L-ornithine. It carries out the reaction taurine + L-arginine = taurocyamine + L-ornithine. It functions in the pathway amine and polyamine biosynthesis; creatine biosynthesis; creatine from L-arginine and glycine: step 1/2. In terms of biological role, transamidinase that catalyzes the transfer of the amidino group of L-arginine onto the amino moiety of acceptor metabolites such as glycine, beta-alanine, gamma-aminobutyric acid (GABA) and taurine yielding the corresponding guanidine derivatives. Catalyzes the rate-limiting step of creatine biosynthesis, namely the transfer of the amidino group from L-arginine to glycine to generate guanidinoacetate, which is then methylated by GAMT to form creatine. Provides creatine as a source for ATP generation in tissues with high energy demands, in particular skeletal muscle, heart and brain. This chain is Glycine amidinotransferase, mitochondrial (GATM), found in Macaca fascicularis (Crab-eating macaque).